We begin with the raw amino-acid sequence, 55 residues long: UPF0434 protein BPEN_388 (55 aa).

This sequence belongs to the UPF0434 family.

This chain is UPF0434 protein BPEN_388, found in Blochmanniella pennsylvanica (strain BPEN).